A 279-amino-acid chain; its full sequence is NADPH-dependent 7-cyano-7-deazaguanine reductase (279 aa).

Substrate is bound at residue 86-88; the sequence is IES. NADPH is bound at residue 88 to 89; sequence SK. Cys-187 acts as the Thioimide intermediate in catalysis. Asp-194 acts as the Proton donor in catalysis. 226-227 is a binding site for substrate; the sequence is HE. 255–256 provides a ligand contact to NADPH; the sequence is RG.

The protein belongs to the GTP cyclohydrolase I family. QueF type 2 subfamily. In terms of assembly, homodimer.

It localises to the cytoplasm. It carries out the reaction 7-aminomethyl-7-carbaguanine + 2 NADP(+) = 7-cyano-7-deazaguanine + 2 NADPH + 3 H(+). The protein operates within tRNA modification; tRNA-queuosine biosynthesis. Catalyzes the NADPH-dependent reduction of 7-cyano-7-deazaguanine (preQ0) to 7-aminomethyl-7-deazaguanine (preQ1). The chain is NADPH-dependent 7-cyano-7-deazaguanine reductase from Actinobacillus pleuropneumoniae serotype 5b (strain L20).